The chain runs to 88 residues: Small ribosomal subunit protein bS20 (88 aa).

The segment at 1–21 (MANSAQAKKRARQNVKARKHN) is disordered. Residues 7–21 (AKKRARQNVKARKHN) are compositionally biased toward basic residues.

The protein belongs to the bacterial ribosomal protein bS20 family.

Functionally, binds directly to 16S ribosomal RNA. The polypeptide is Small ribosomal subunit protein bS20 (Acinetobacter baumannii (strain AB307-0294)).